We begin with the raw amino-acid sequence, 162 residues long: MAENNRAVIKLKEKFAASILDVREFRGEVTVTVAREKVVDICRFLKESLQYNLCTDVTAVDYLGKQEPRFMVVYNLYSIPNKDRLRLKAGVPDADCSIDTVSCVWNSANWLEREVYDLMGVQFNNHPDLRRILMTDDWVGHPLRKDYPLQGPDREPYKGRLS.

It belongs to the complex I 30 kDa subunit family. As to quaternary structure, NDH-1 is composed of 14 different subunits. Subunits NuoB, C, D, E, F, and G constitute the peripheral sector of the complex.

The protein localises to the cell inner membrane. The catalysed reaction is a quinone + NADH + 5 H(+)(in) = a quinol + NAD(+) + 4 H(+)(out). Functionally, NDH-1 shuttles electrons from NADH, via FMN and iron-sulfur (Fe-S) centers, to quinones in the respiratory chain. The immediate electron acceptor for the enzyme in this species is believed to be ubiquinone. Couples the redox reaction to proton translocation (for every two electrons transferred, four hydrogen ions are translocated across the cytoplasmic membrane), and thus conserves the redox energy in a proton gradient. This Geobacter sulfurreducens (strain ATCC 51573 / DSM 12127 / PCA) protein is NADH-quinone oxidoreductase subunit C.